The chain runs to 241 residues: GLIPR1-like protein 1 (241 aa).

Positions 1-22 (MILRKKLSYLWTLGLCLVASKS) are cleaved as a signal peptide. An SCP domain is found at 39 to 172 (LRLHNEARTN…PDSALLVCNY (134 aa)). The GPI-anchor amidated serine moiety is linked to residue Ser-220. A propeptide spans 221 to 241 (GTRQLIACNPLYLISVLLTIF) (removed in mature form).

It belongs to the CRISP family. Part of a oolemmal binding multimeric complex (IZUMO1 complex) composed at least of IZUMO1 and GLIPR1L1; the complex assemblage is influenced by the maturation status of the male germ cell. Interacts with IZUMO1. In terms of processing, N-glycosylated. N-glycosylation decreases during the transit in the caput. Highly expressed in testis, where it localizes to round and elongating spermatids and differentiated spermatozoa in the seminiferous tubules and epididymis (at protein level).

It is found in the cytoplasmic vesicle. The protein resides in the secretory vesicle. Its subcellular location is the acrosome. The protein localises to the cell membrane. It localises to the membrane raft. Required for optimal fertilization at the stage of sperm-oocyte fusion, plays a role in optimizing acrosome function, the translocation of IZUMO1 during the acrosome reaction and the fertilization process. Component of epididymosomes, one type of membranous microvesicules which mediate the transfer of lipids and proteins to spermatozoa plasma membrane during epididymal maturation. Also a component of the CD9-positive microvesicules found in the cauda region. The polypeptide is GLIPR1-like protein 1 (Bos taurus (Bovine)).